The following is a 232-amino-acid chain: 5'-methylthioadenosine/S-adenosylhomocysteine nucleosidase (232 aa).

Catalysis depends on Glu-12, which acts as the Proton acceptor. Residues Gly-78, Ile-152, and 173 to 174 (ME) contribute to the substrate site. The active-site Proton donor is Asp-197.

The protein belongs to the PNP/UDP phosphorylase family. MtnN subfamily. In terms of assembly, homodimer.

It catalyses the reaction S-adenosyl-L-homocysteine + H2O = S-(5-deoxy-D-ribos-5-yl)-L-homocysteine + adenine. It carries out the reaction S-methyl-5'-thioadenosine + H2O = 5-(methylsulfanyl)-D-ribose + adenine. The enzyme catalyses 5'-deoxyadenosine + H2O = 5-deoxy-D-ribose + adenine. It functions in the pathway amino-acid biosynthesis; L-methionine biosynthesis via salvage pathway; S-methyl-5-thio-alpha-D-ribose 1-phosphate from S-methyl-5'-thioadenosine (hydrolase route): step 1/2. In terms of biological role, catalyzes the irreversible cleavage of the glycosidic bond in both 5'-methylthioadenosine (MTA) and S-adenosylhomocysteine (SAH/AdoHcy) to adenine and the corresponding thioribose, 5'-methylthioribose and S-ribosylhomocysteine, respectively. Also cleaves 5'-deoxyadenosine, a toxic by-product of radical S-adenosylmethionine (SAM) enzymes, into 5-deoxyribose and adenine. Thus, is required for in vivo function of the radical SAM enzymes biotin synthase and lipoic acid synthase, that are inhibited by 5'-deoxyadenosine accumulation. This is 5'-methylthioadenosine/S-adenosylhomocysteine nucleosidase from Edwardsiella ictaluri (strain 93-146).